Reading from the N-terminus, the 832-residue chain is Tuftelin-interacting protein 11 (832 aa).

Disordered stretches follow at residues 1–21 and 33–145; these read MSMS…GVEI and NEFN…GNWE. 2 stretches are compositionally biased toward basic and acidic residues: residues 36 to 49 and 88 to 99; these read NPDR…KEEA and TAAEEKAEREGS. The segment covering 121-130 has biased composition (polar residues); sequence TGGSFKTSQR. Residues 148 to 194 form the G-patch domain; the sequence is TRGIGQKLLQKMGYVPGKGLGKNAQGIVNPIEAKLRKGKGAVGAYGS. Phosphoserine is present on S209.

It belongs to the TFP11/STIP family. In terms of assembly, identified in the spliceosome C complex.

The protein resides in the nucleus. Functionally, involved in pre-mRNA splicing, specifically in spliceosome disassembly during late-stage splicing events. In Danio rerio (Zebrafish), this protein is Tuftelin-interacting protein 11 (tfip11).